Reading from the N-terminus, the 423-residue chain is Gamma-glutamyl phosphate reductase (423 aa).

This sequence belongs to the gamma-glutamyl phosphate reductase family.

The protein localises to the cytoplasm. It carries out the reaction L-glutamate 5-semialdehyde + phosphate + NADP(+) = L-glutamyl 5-phosphate + NADPH + H(+). Its pathway is amino-acid biosynthesis; L-proline biosynthesis; L-glutamate 5-semialdehyde from L-glutamate: step 2/2. Functionally, catalyzes the NADPH-dependent reduction of L-glutamate 5-phosphate into L-glutamate 5-semialdehyde and phosphate. The product spontaneously undergoes cyclization to form 1-pyrroline-5-carboxylate. The sequence is that of Gamma-glutamyl phosphate reductase from Pseudomonas entomophila (strain L48).